We begin with the raw amino-acid sequence, 420 residues long: 2,3-dimethylmalate dehydratase large subunit (420 aa).

3 residues coordinate [4Fe-4S] cluster: cysteine 301, cysteine 361, and cysteine 364.

The protein belongs to the aconitase/IPM isomerase family. LeuC type 2 subfamily. Heterodimer of a large and a small subunit. [4Fe-4S] cluster serves as cofactor.

The enzyme catalyses (2R,3S)-2,3-dimethylmalate = dimethylmaleate + H2O. The protein operates within cofactor degradation; nicotinate degradation; propanoate and pyruvate from 6-hydroxynicotinate: step 7/8. This is 2,3-dimethylmalate dehydratase large subunit (dmdA) from Eubacterium barkeri (Clostridium barkeri).